We begin with the raw amino-acid sequence, 93 residues long: Small ribosomal subunit protein bS18 (93 aa).

This sequence belongs to the bacterial ribosomal protein bS18 family. Part of the 30S ribosomal subunit. Forms a tight heterodimer with protein bS6.

Its function is as follows. Binds as a heterodimer with protein bS6 to the central domain of the 16S rRNA, where it helps stabilize the platform of the 30S subunit. The chain is Small ribosomal subunit protein bS18 from Paracidovorax citrulli (strain AAC00-1) (Acidovorax citrulli).